Consider the following 111-residue polypeptide: Large ribosomal subunit protein uL23 (111 aa).

Belongs to the universal ribosomal protein uL23 family. Part of the 50S ribosomal subunit. Contacts protein L29, and trigger factor when it is bound to the ribosome.

In terms of biological role, one of the early assembly proteins it binds 23S rRNA. One of the proteins that surrounds the polypeptide exit tunnel on the outside of the ribosome. Forms the main docking site for trigger factor binding to the ribosome. This is Large ribosomal subunit protein uL23 from Chlamydia abortus (strain DSM 27085 / S26/3) (Chlamydophila abortus).